The following is a 394-amino-acid chain: NAD(P)H-quinone oxidoreductase subunit H (394 aa).

Belongs to the complex I 49 kDa subunit family. As to quaternary structure, NDH-1 can be composed of about 15 different subunits; different subcomplexes with different compositions have been identified which probably have different functions.

The protein resides in the cellular thylakoid membrane. The enzyme catalyses a plastoquinone + NADH + (n+1) H(+)(in) = a plastoquinol + NAD(+) + n H(+)(out). It carries out the reaction a plastoquinone + NADPH + (n+1) H(+)(in) = a plastoquinol + NADP(+) + n H(+)(out). In terms of biological role, NDH-1 shuttles electrons from an unknown electron donor, via FMN and iron-sulfur (Fe-S) centers, to quinones in the respiratory and/or the photosynthetic chain. The immediate electron acceptor for the enzyme in this species is believed to be plastoquinone. Couples the redox reaction to proton translocation, and thus conserves the redox energy in a proton gradient. Cyanobacterial NDH-1 also plays a role in inorganic carbon-concentration. This chain is NAD(P)H-quinone oxidoreductase subunit H, found in Acaryochloris marina (strain MBIC 11017).